A 311-amino-acid chain; its full sequence is MTKIIFMGTPAFSATVLEGLLTDERYDIVAVVTQPDRAVGRKKEIRMTPVKELALAHELPIYQPEKLSGSEEMAQLISLGADGIVTAAYGQFLPSKLLDSMDFAVNVHASLLPKYRGGAPIHYAIINGDAEAGVTIMEMVKEMDAGDMVSQKALPILDQDNVGTMFEKLAVLGRDLLLETLPAYIAGEIKPVPQDASQVTFSPNISPEEERLDWNKSGRDIFNQIRGMYPWPVAHTLLNGKRFKIYEGDLVEGQGQAGHIIEKTKKSLVVATGQGAISLKSVQPEGKPRMAIADFLNGVGRNLEVGDVFGQ.

110-113 (SLLP) provides a ligand contact to (6S)-5,6,7,8-tetrahydrofolate.

The protein belongs to the Fmt family.

The catalysed reaction is L-methionyl-tRNA(fMet) + (6R)-10-formyltetrahydrofolate = N-formyl-L-methionyl-tRNA(fMet) + (6S)-5,6,7,8-tetrahydrofolate + H(+). In terms of biological role, attaches a formyl group to the free amino group of methionyl-tRNA(fMet). The formyl group appears to play a dual role in the initiator identity of N-formylmethionyl-tRNA by promoting its recognition by IF2 and preventing the misappropriation of this tRNA by the elongation apparatus. This chain is Methionyl-tRNA formyltransferase, found in Streptococcus thermophilus (strain ATCC BAA-250 / LMG 18311).